Reading from the N-terminus, the 1453-residue chain is Collagen alpha-1(I) chain (1453 aa).

Positions 1 to 22 (MFSFVDLRLLLLLGATALLTHG) are cleaved as a signal peptide. The propeptide at 23–151 (QEDIPEVSCI…PPGLGGNFAS (129 aa)) is N-terminal propeptide. A VWFC domain is found at 29-87 (VSCIHNGLRVPNGETWKPEVCLICICHNGTAVCDDVQCNEELDCPNPQRREGECCAFCP). A glycan (N-linked (GlcNAc...) asparagine) is linked at Asn56. The segment at 94-1210 (NSEDVGVEGP…GGRYYRADDA (1117 aa)) is disordered. Pro residues-rich tracts occupy residues 109–118 (PQGPRGPVGP) and 128–143 (PGLPGPPGPPGPPGPP). Residues 152-167 (QMSYGYDEKSAGVSVP) are nonhelical region (N-terminal). Lys160 is subject to Allysine. Residue Ser161 is modified to Phosphoserine. The segment at 168-1181 (GPMGPSGPRG…PGPPGPPGPP (1014 aa)) is triple-helical region. Residues Pro179, Pro182, Pro185, Pro194, Pro197, Pro200, Pro215, Pro230, Pro236, Pro245, and Pro251 each carry the 4-hydroxyproline modification. Gly residues predominate over residues 198 to 207 (GEPGGSGPMG). Basic and acidic residues predominate over residues 218–232 (NGDDGEAGKPGRPGE). At Lys254 the chain carries 5-hydroxylysine; alternate. Residue Lys254 is glycosylated (O-linked (Gal...) hydroxylysine; alternate). Ser260 is modified (phosphoserine). Residues 268–284 (DAGPAGPKGEPGSPGEN) are compositionally biased toward low complexity. Pro278, Pro281, Pro287, Pro296, and Pro302 each carry 4-hydroxyproline. Residues 307–320 (TAGARGNDGAVGAA) are compositionally biased toward low complexity. Pro residues predominate over residues 322-334 (PPGPTGPTGPPGF). A 4-hydroxyproline mark is found at Pro323, Pro332, Pro335, Pro362, Pro365, Pro377, Pro383, Pro392, Pro398, Pro401, and Pro416. Positions 368 to 407 (AGAAGPAGNPGADGQPGAKGANGAPGIAGAPGFPGARGPS) are enriched in low complexity. 5-hydroxylysine is present on Lys419. 4-hydroxyproline occurs at positions 425, 428, 440, 449, 464, 470, 479, and 485. The segment covering 474-483 (GERGGPGSRG) has biased composition (gly residues). A 5-hydroxylysine modification is found at Lys494. Residues 499 to 515 (ERGAPGPAGPKGSPGEA) show a composition bias toward low complexity. 4-hydroxyproline is present on residues Pro503, Pro512, Pro518, Pro524, Pro533, Pro536, Pro545, Pro554, Pro560, Pro572, Pro581, Pro590, Pro593, Pro611, Pro629, Pro635, Pro641, Pro647, Pro653, Pro659, Pro671, Pro680, Pro692, Pro704, Pro707, Pro713, Pro719, and Pro728. Residues 527 to 566 (KGLTGSPGSPGPDGKTGPPGPAGQDGRPGPAGPPGARGQA) are compositionally biased toward low complexity. Residues 623 to 650 (QGPAGSPGFQGLPGPAGPPGEAGKPGEQ) show a composition bias toward low complexity. Composition is skewed to low complexity over residues 685-695 (PRGNNGAPGND) and 703-716 (APGAPGSQGAPGLQ). The Cell attachment site signature appears at 734-736 (RGD). 5-hydroxylysine is present on Lys740. Pro746, Pro761, and Pro767 each carry 4-hydroxyproline. Ser776 carries the phosphoserine modification. 4-hydroxyproline occurs at positions 788, 797, 806, 812, 830, 839, and 848. Low complexity predominate over residues 800–815 (AGFAGPPGADGQPGAK). Over residues 829–841 (PPGPAGPAGPPGP) the composition is skewed to pro residues. Residues 842–872 (IGNVGAPGPKGPRGAAGPPGATGFPGAAGRV) are compositionally biased toward low complexity. Lys851 is subject to 5-hydroxylysine. A 4-hydroxyproline mark is found at Pro860 and Pro866. Pro874 is modified (3-hydroxyproline). 4-hydroxyproline is present on residues Pro875, Pro884, Pro887, Pro908, Pro917, Pro926, Pro935, Pro953, Pro962, Pro965, Pro971, Pro986, Pro992, Pro998, Pro1007, and Pro1013. Over residues 901 to 910 (ETGPAGRPGE) the composition is skewed to low complexity. The segment covering 920–935 (AGEKGSPGADGPAGSP) has biased composition (low complexity). Pro residues predominate over residues 985-995 (PPGPMGPPGLA). Over residues 997–1012 (PPGESGREGSPGAEGS) the composition is skewed to low complexity. Position 1022 is a 5-hydroxylysine (Lys1022). Positions 1031–1046 (AGPPGAPGAPGAPGPV) are enriched in pro residues. A 4-hydroxyproline mark is found at Pro1034, Pro1037, and Pro1040. Positions 1067-1081 (IGPAGARGPAGPQGP) are enriched in low complexity. A Cell attachment site motif is present at residues 1082 to 1084 (RGD). Basic and acidic residues predominate over residues 1082–1096 (RGDKGETGEQGDRGI). A 5-hydroxylysine modification is found at Lys1085. Lys1097 carries the 5-hydroxylysine; alternate modification. O-linked (Gal...) hydroxylysine; alternate glycosylation is present at Lys1097. Positions 1102–1148 (FSGLQGPPGSPGSPGEQGPSGASGPAGPRGPPGSAGSPGKDGLNGLP) are enriched in low complexity. Residues Pro1109, Pro1112, Pro1115, Pro1133, and Pro1148 each carry the 4-hydroxyproline modification. Residue Pro1153 is modified to 3-hydroxyproline. 4-hydroxyproline is present on Pro1154. Residues 1166–1181 (AGPPGPPGPPGPPGPP) show a composition bias toward pro residues. Pro1168 bears the 3-hydroxyproline mark. A 4-hydroxyproline modification is found at Pro1169. At Pro1171 the chain carries 3-hydroxyproline. Position 1172 is a 4-hydroxyproline (Pro1172). A 3-hydroxyproline modification is found at Pro1174. 3 positions are modified to 4-hydroxyproline: Pro1175, Pro1178, and Pro1181. A nonhelical region (C-terminal) region spans residues 1182–1207 (SGGYDFSFLPQPPQEKSQDGGRYYRA). Position 1197 is an allysine (Lys1197). The span at 1197-1210 (KSQDGGRYYRADDA) shows a compositional bias: basic and acidic residues. Positions 1208–1453 (DDANVVRDRD…GLDIGPACFV (246 aa)) are cleaved as a propeptide — C-terminal propeptide. Residues 1218–1453 (LEVDTTLKSL…GLDIGPACFV (236 aa)) form the Fibrillar collagen NC1 domain. Intrachain disulfides connect Cys1248-Cys1280, Cys1288-Cys1451, and Cys1359-Cys1404. Ca(2+) is bound by residues Asp1266, Asn1268, Gln1269, Cys1271, and Asp1274. A glycan (N-linked (GlcNAc...) asparagine) is linked at Asn1354.

This sequence belongs to the fibrillar collagen family. As to quaternary structure, trimers of one alpha 2(I) and two alpha 1(I) chains. Interacts with MRC2. Interacts with TRAM2. Interacts with MFAP4 in a Ca (2+)-dependent manner. Post-translationally, contains mostly 4-hydroxyproline. Proline residues at the third position of the tripeptide repeating unit (G-X-Y) are hydroxylated in some or all of the chains. Contains 3-hydroxyproline at a few sites. This modification occurs on the first proline residue in the sequence motif Gly-Pro-Hyp, where Hyp is 4-hydroxyproline. In terms of processing, lysine residues at the third position of the tripeptide repeating unit (G-X-Y) are 5-hydroxylated in some or all of the chains. Post-translationally, O-glycosylated on hydroxylated lysine residues. The O-linked glycan consists of a Glc-Gal disaccharide. Forms the fibrils of tendon, ligaments and bones. In bones the fibrils are mineralized with calcium hydroxyapatite.

The protein localises to the secreted. It is found in the extracellular space. The protein resides in the extracellular matrix. Type I collagen is a member of group I collagen (fibrillar forming collagen). This Mus musculus (Mouse) protein is Collagen alpha-1(I) chain.